A 438-amino-acid polypeptide reads, in one-letter code: MHLAVVGLSHRTAPVAVREKLSIPEQQVEAAIQQLKSYPHIEEVAILSTCNRLEIYCVTRATEPGVREITQFLSEHSHLPLGELRPHLFVLLHQDAVMHLMRVAAGLDSLVLGEGQILSQVKTMYKLGQQYEGVGRILNRLLKQAVTAGKRVRTETSIGTGAVSISSAAVELAQLKVIARDDRSDGNLAGQRVLILGAGKMSRLLVQHLIAKGADTIQILNRTLGRAEELAKQYGGDLQIQVGLLSGLMNAIVEADIVFTSTSATDPILDRAKLEMVLAPEQRLMLIDIAVPRNVAADVVELTSVESYNVDDLREVVAQNQESRRKLAEEAEALLEEEVDAFDNWWQSLDTVPTINCLRDKIEMIREQELEKALSRLGTEFGDKHQAVVEALTRGIVNKILHDPMVQLRSQQDIEARRRAVDALQMLFNLDPQGQLSS.

Residues 49–52 (TCNR), Ser109, 114–116 (EGQ), and Gln120 contribute to the substrate site. Cys50 serves as the catalytic Nucleophile. An NADP(+)-binding site is contributed by 197-202 (GAGKMS).

This sequence belongs to the glutamyl-tRNA reductase family. In terms of assembly, homodimer.

The catalysed reaction is (S)-4-amino-5-oxopentanoate + tRNA(Glu) + NADP(+) = L-glutamyl-tRNA(Glu) + NADPH + H(+). It participates in porphyrin-containing compound metabolism; protoporphyrin-IX biosynthesis; 5-aminolevulinate from L-glutamyl-tRNA(Glu): step 1/2. It functions in the pathway porphyrin-containing compound metabolism; chlorophyll biosynthesis. Catalyzes the NADPH-dependent reduction of glutamyl-tRNA(Glu) to glutamate 1-semialdehyde (GSA). This chain is Glutamyl-tRNA reductase, found in Synechococcus elongatus (strain ATCC 33912 / PCC 7942 / FACHB-805) (Anacystis nidulans R2).